The following is a 274-amino-acid chain: Peroxiredoxin-4 (274 aa).

The first 40 residues, Met-1–Gly-40, serve as a signal peptide directing secretion. A Thioredoxin domain is found at Ala-82–Tyr-240. Residue Cys-127 is the Cysteine sulfenic acid (-SOH) intermediate of the active site.

This sequence belongs to the peroxiredoxin family. AhpC/Prx1 subfamily. Homodimer; disulfide-linked, upon oxidation. 5 homodimers assemble to form a ring-like decamer. In terms of processing, the enzyme can be inactivated by further oxidation of the cysteine sulfenic acid (C(P)-SOH) to sulphinic acid (C(P)-SO2H) and sulphonic acid (C(P)-SO3H) instead of its condensation to a disulfide bond.

It is found in the cytoplasm. The protein resides in the endoplasmic reticulum. It carries out the reaction a hydroperoxide + [thioredoxin]-dithiol = an alcohol + [thioredoxin]-disulfide + H2O. Thiol-specific peroxidase that catalyzes the reduction of hydrogen peroxide and organic hydroperoxides to water and alcohols, respectively. Plays a role in cell protection against oxidative stress by detoxifying peroxides and as sensor of hydrogen peroxide-mediated signaling events. Regulates the activation of NF-kappa-B in the cytosol by a modulation of I-kappa-B-alpha phosphorylation. This chain is Peroxiredoxin-4 (PRDX4), found in Bos taurus (Bovine).